Reading from the N-terminus, the 496-residue chain is Beta-amylase (496 aa).

Residues Asp54, His94, and Asp102 each coordinate substrate. The Proton donor role is filled by Glu187. Lys296, His301, and Thr343 together coordinate substrate. Glu381 serves as the catalytic Proton acceptor. Substrate contacts are provided by residues 382-383 (NA) and Arg421. The tract at residues 455 to 496 (YNHGIPPLKRSGPKIPDDVLNEATKPIPPFPWDSETDMKVDG) is disordered.

This sequence belongs to the glycosyl hydrolase 14 family.

It carries out the reaction Hydrolysis of (1-&gt;4)-alpha-D-glucosidic linkages in polysaccharides so as to remove successive maltose units from the non-reducing ends of the chains.. The protein is Beta-amylase (BMY1) of Medicago sativa (Alfalfa).